A 282-amino-acid chain; its full sequence is MFFIEIIKSVIFGIIEGITEWLPISSTGHLILVQEFIHYQKQNAAFMEMFNVVIQLGAILAVVFIYFDKLNPFKPDKTPRQVQKTWQLWAKVVVASLPAVIIGIPLDNWFEKNFHNFVSVAIMLIIYGIAFILIERRNQEVEPTVTNLEKLPYKTALYIGFFQVLSLFPGTSRSGATIVGGLLNGTSRSVVTEFTFFLGIPVMFGASGIKVLKFILKGNSLDLGQLTLLLVAMIVAFGVSMYVIRFLTDYVKKHDFTVFGKYRIGLGALLLIYWVFKALFAK.

7 consecutive transmembrane segments (helical) span residues 45–65 (AFMEMFNVVIQLGAILAVVFI), 86–106 (WQLWAKVVVASLPAVIIGIPL), 114–134 (FHNFVSVAIMLIIYGIAFILI), 151–171 (LPYKTALYIGFFQVLSLFPGT), 196–216 (FFLGIPVMFGASGIKVLKFIL), 224–244 (GQLTLLLVAMIVAFGVSMYVI), and 256–276 (FTVFGKYRIGLGALLLIYWVF).

The protein belongs to the UppP family.

The protein localises to the cell membrane. The catalysed reaction is di-trans,octa-cis-undecaprenyl diphosphate + H2O = di-trans,octa-cis-undecaprenyl phosphate + phosphate + H(+). Its function is as follows. Catalyzes the dephosphorylation of undecaprenyl diphosphate (UPP). Confers resistance to bacitracin. This chain is Undecaprenyl-diphosphatase, found in Streptococcus gordonii (strain Challis / ATCC 35105 / BCRC 15272 / CH1 / DL1 / V288).